Reading from the N-terminus, the 506-residue chain is Sodium-coupled neutral amino acid symporter 2 (506 aa).

The segment at 1–23 is disordered; the sequence is MKKAEMGRFNISPDEDSSSYSSN. Residues 1-76 lie on the Cytoplasmic side of the membrane; that stretch reads MKKAEMGRFN…HPGTTSFGMS (76 aa). The interval 1–96 is regulates protein turnover upon amino acid deprivation; sequence MKKAEMGRFN…SGILGLSYAM (96 aa). Residues serine 12, serine 21, serine 22, and serine 55 each carry the phosphoserine modification. A helical membrane pass occupies residues 77-96; that stretch reads VFNLSNAIVGSGILGLSYAM. Asparagine 82 lines the Na(+) pocket. Topologically, residues 97 to 102 are extracellular; it reads ANTGIA. Residues 103-123 traverse the membrane as a helical segment; the sequence is LFIILLTFVSIFSLYSVHLLL. Residues 124–158 are Cytoplasmic-facing; that stretch reads KTANEGGSLLYEQLGHKAFGMVGKLTASGSITMQN. The helical transmembrane segment at 159–177 threads the bilayer; it reads IGAMSSYLFIVKYELPLVI. Residues 178–188 are Extracellular-facing; that stretch reads QALMNIEDTNG. Residues 189–209 form a helical membrane-spanning segment; that stretch reads LWYLNGDYLVLLVSLVLILPL. The Cytoplasmic segment spans residues 210 to 217; the sequence is SLLRNLGY. The chain crosses the membrane as a helical span at residues 218-238; it reads LGYTSGLSLLCMMFFLIVVIF. Residues 239 to 292 lie on the Extracellular side of the membrane; it reads KKFQISCPAEIAFLVNETVNSSLTQPATFLPDMGFNRTESDSCQPRYFIFNSQT. Cysteine 245 and cysteine 281 are joined by a disulfide. Residues asparagine 258 and asparagine 274 are each glycosylated (N-linked (GlcNAc...) asparagine). A helical membrane pass occupies residues 293–313; it reads VYAVPILTFSFVCHPAILPIY. Residues 314 to 329 are Cytoplasmic-facing; it reads EELKGRSRRRMMNVSK. A helical membrane pass occupies residues 330–350; it reads ISFFAMFLMYLLAALFGYLTF. At 351–371 the chain is on the extracellular side; the sequence is YGHVESELLHTYSSVMETDIL. Residues 372–392 form a helical membrane-spanning segment; sequence LLIVRLAVLVAVTLTVPVVIF. Residue threonine 386 participates in Na(+) binding. At 393–413 the chain is on the cytoplasmic side; that stretch reads PIRSSITHLLCASKEFSWWRH. The chain crosses the membrane as a helical span at residues 414–434; sequence SVITVSILVFTNLLVIFVPNI. At 435-436 the chain is on the extracellular side; the sequence is RD. The helical transmembrane segment at 437–457 threads the bilayer; the sequence is IFGFIGASAAAMLIFILPSAF. Topologically, residues 458–472 are cytoplasmic; that stretch reads YIKLVKKEPMKSVQK. The helical transmembrane segment at 473–495 threads the bilayer; it reads IGAMFFLLSGIVVMTGSMALIVL. The Extracellular segment spans residues 496 to 506; sequence DWVHNAPGGGH.

The protein belongs to the amino acid/polyamine transporter 2 family. Polyubiquitination by NEDD4L regulates the degradation and the activity of SLC38A2.

Its subcellular location is the cell membrane. It catalyses the reaction L-alanine(in) + Na(+)(in) = L-alanine(out) + Na(+)(out). It carries out the reaction glycine(in) + Na(+)(in) = glycine(out) + Na(+)(out). The enzyme catalyses L-serine(in) + Na(+)(in) = L-serine(out) + Na(+)(out). The catalysed reaction is L-proline(in) + Na(+)(in) = L-proline(out) + Na(+)(out). It catalyses the reaction L-methionine(in) + Na(+)(in) = L-methionine(out) + Na(+)(out). It carries out the reaction L-histidine(in) + Na(+)(in) = L-histidine(out) + Na(+)(out). The enzyme catalyses L-asparagine(in) + Na(+)(in) = L-asparagine(out) + Na(+)(out). The catalysed reaction is L-glutamine(in) + Na(+)(in) = L-glutamine(out) + Na(+)(out). It catalyses the reaction L-threonine(in) + Na(+)(in) = L-threonine(out) + Na(+)(out). It carries out the reaction L-leucine(in) + Na(+)(in) = L-leucine(out) + Na(+)(out). The enzyme catalyses L-phenylalanine(in) + Na(+)(in) = L-phenylalanine(out) + Na(+)(out). With respect to regulation, inhibited by N-methyl-D-glucamine. Inhibited by choline. Allosteric regulation of sodium ions binding by pH. In terms of biological role, symporter that cotransports neutral amino acids and sodium ions from the extracellular to the intracellular side of the cell membrane. The transport is pH-sensitive, Li(+)-intolerant, electrogenic, driven by the Na(+) electrochemical gradient and cotransports of neutral amino acids and sodium ions with a stoichiometry of 1:1. May function in the transport of amino acids at the blood-brain barrier. May function in the transport of amino acids in the supply of maternal nutrients to the fetus through the placenta. Maintains a key metabolic glutamine/glutamate balance underpinning retrograde signaling by dendritic release of the neurotransmitter glutamate. Transports L-proline in differentiating osteoblasts for the efficient synthesis of proline-enriched proteins and provides proline essential for osteoblast differentiation and bone formation during bone development. This is Sodium-coupled neutral amino acid symporter 2 from Bos taurus (Bovine).